The following is a 197-amino-acid chain: Nucleoside triphosphate pyrophosphatase (197 aa).

The active-site Proton acceptor is the D70.

It belongs to the Maf family. Requires a divalent metal cation as cofactor.

It is found in the cytoplasm. It catalyses the reaction a ribonucleoside 5'-triphosphate + H2O = a ribonucleoside 5'-phosphate + diphosphate + H(+). It carries out the reaction a 2'-deoxyribonucleoside 5'-triphosphate + H2O = a 2'-deoxyribonucleoside 5'-phosphate + diphosphate + H(+). Its function is as follows. Nucleoside triphosphate pyrophosphatase. May have a dual role in cell division arrest and in preventing the incorporation of modified nucleotides into cellular nucleic acids. In Shigella flexneri, this protein is Nucleoside triphosphate pyrophosphatase (yhdE).